We begin with the raw amino-acid sequence, 761 residues long: Protein PHTF1 (761 aa).

The PHTF domain maps to 6–150; that stretch reads RDAISWYQKK…VHCQIVSTQI (145 aa). Transmembrane regions (helical) follow at residues 77 to 97, 99 to 119, and 121 to 141; these read GLVR…VTSL, IFVW…LYLL, and PIVS…MGTV. The tract at residues 152–184 is disordered; it reads RPSGNNGNRRRRKLRKTVNGDGSRDNGNNSPDK. Residues 170–181 are compositionally biased toward low complexity; that stretch reads NGDGSRDNGNNS. Residues asparagine 179 and asparagine 224 are each glycosylated (N-linked (GlcNAc...) asparagine). Phosphoserine occurs at positions 272, 276, 277, 333, and 335. The disordered stretch occupies residues 345–414; sequence VFSQGSRSGM…NTIHSGTKRD (70 aa). The span at 347 to 363 shows a compositional bias: low complexity; sequence SQGSRSGMSGGSRSLNL. Asparagine 362 is a glycosylation site (N-linked (GlcNAc...) asparagine). Basic and acidic residues predominate over residues 364–375; the sequence is SRRDSESTRHDS. Asparagine 430 is a glycosylation site (N-linked (GlcNAc...) asparagine). Helical transmembrane passes span 472–492, 514–534, 610–630, and 644–664; these read GVGY…FPFL, TLFC…INFI, VVVS…CAQV, and WEFL…ASLG. 2 N-linked (GlcNAc...) asparagine glycosylation sites follow: asparagine 673 and asparagine 732. The helical transmembrane segment at 736 to 756 threads the bilayer; that stretch reads VVILSAVSGVISDLLGFNIRL.

Interacts with FEM1B. As to expression, widely expressed with highest levels in testis.

It is found in the endoplasmic reticulum membrane. The protein localises to the golgi apparatus. The protein resides in the cis-Golgi network membrane. The sequence is that of Protein PHTF1 from Mus musculus (Mouse).